A 180-amino-acid chain; its full sequence is MSRQANRGTESKKMSSELFTLTYGALVTQLCKDYENDEDVNKQLDRMGYNIGVRLIEDFLARSNVGRCHDFRETADVIAKVAFKMYLGITPSITNWSPAGDEFSLILENNPLVDFVELPDNHSALIYSNLLCGVLRGALEMVQMAVEAKFVQDTLKGDGVTEIRMRFIRRIEDNLPAGEE.

Cysteine 68 is lipidated: S-palmitoyl cysteine.

Belongs to the TRAPP small subunits family. BET3 subfamily. Homodimer. Component of the multisubunit transport protein particle (TRAPP) complex, which includes at least TRAPPC2, TRAPPC2L, TRAPPC3, TRAPPC3L, TRAPPC4, TRAPPC5, TRAPPC8, TRAPPC9, TRAPPC10, TRAPPC11 and TRAPPC12. Heterodimer with TRAPPC6A. The heterodimer TRAPPC3-TRAPPC6A interacts with TRAPPC2L. Heterodimer with TRAPPC6b. The heterodimer TRAPPC6B-TRAPPC3 interacts with TRAPPC1 likely providing a core for TRAPP complex formation. Widely expressed. Expressed in lung, heart, liver, spleen, brain and kidney.

The protein resides in the golgi apparatus. The protein localises to the cis-Golgi network. It is found in the endoplasmic reticulum. May play a role in vesicular transport from endoplasmic reticulum to Golgi. This chain is Trafficking protein particle complex subunit 3, found in Mus musculus (Mouse).